We begin with the raw amino-acid sequence, 561 residues long: Urocanate hydratase (561 aa).

NAD(+) contacts are provided by residues 52-53 (GG), Gln130, 176-178 (GMG), Glu196, Arg201, 242-243 (NA), 263-267 (QTSAH), 273-274 (YL), and Tyr322. The active site involves Cys410. Residue Gly492 coordinates NAD(+).

Belongs to the urocanase family. NAD(+) serves as cofactor.

It localises to the cytoplasm. It catalyses the reaction 4-imidazolone-5-propanoate = trans-urocanate + H2O. It functions in the pathway amino-acid degradation; L-histidine degradation into L-glutamate; N-formimidoyl-L-glutamate from L-histidine: step 2/3. Its function is as follows. Catalyzes the conversion of urocanate to 4-imidazolone-5-propionate. The protein is Urocanate hydratase of Salmonella gallinarum (strain 287/91 / NCTC 13346).